Here is a 324-residue protein sequence, read N- to C-terminus: tRNA dimethylallyltransferase (324 aa).

20-27 (GPTASGKS) lines the ATP pocket. 22–27 (TASGKS) is a binding site for substrate. Interaction with substrate tRNA stretches follow at residues 45 to 48 (DSAL), 168 to 172 (QRLIR), and 284 to 291 (KRQITWLR).

This sequence belongs to the IPP transferase family. As to quaternary structure, monomer. Mg(2+) serves as cofactor.

The enzyme catalyses adenosine(37) in tRNA + dimethylallyl diphosphate = N(6)-dimethylallyladenosine(37) in tRNA + diphosphate. In terms of biological role, catalyzes the transfer of a dimethylallyl group onto the adenine at position 37 in tRNAs that read codons beginning with uridine, leading to the formation of N6-(dimethylallyl)adenosine (i(6)A). This Hydrogenovibrio crunogenus (strain DSM 25203 / XCL-2) (Thiomicrospira crunogena) protein is tRNA dimethylallyltransferase.